Consider the following 273-residue polypeptide: Non-homologous end joining protein Ku (273 aa).

A Ku domain is found at 13–190 (KLSLVTCPVA…FTGIEKKSDA (178 aa)). The disordered stretch occupies residues 227–251 (KKKAKKPSKAKASKSTKGDDEEKSN). The span at 228 to 240 (KKAKKPSKAKASK) shows a compositional bias: basic residues.

This sequence belongs to the prokaryotic Ku family. In terms of assembly, homodimer. Interacts with LigD.

Functionally, with LigD forms a non-homologous end joining (NHEJ) DNA repair enzyme, which repairs dsDNA breaks with reduced fidelity. Binds linear dsDNA with 5'- and 3'- overhangs but not closed circular dsDNA nor ssDNA. Recruits and stimulates the ligase activity of LigD. The chain is Non-homologous end joining protein Ku from Allorhizobium ampelinum (strain ATCC BAA-846 / DSM 112012 / S4) (Agrobacterium vitis (strain S4)).